Here is a 302-residue protein sequence, read N- to C-terminus: 4-hydroxy-tetrahydrodipicolinate synthase (302 aa).

Thr55 contributes to the pyruvate binding site. Tyr144 acts as the Proton donor/acceptor in catalysis. Lys172 serves as the catalytic Schiff-base intermediate with substrate. Val214 contacts pyruvate.

This sequence belongs to the DapA family. In terms of assembly, homotetramer; dimer of dimers.

The protein resides in the cytoplasm. The catalysed reaction is L-aspartate 4-semialdehyde + pyruvate = (2S,4S)-4-hydroxy-2,3,4,5-tetrahydrodipicolinate + H2O + H(+). It functions in the pathway amino-acid biosynthesis; L-lysine biosynthesis via DAP pathway; (S)-tetrahydrodipicolinate from L-aspartate: step 3/4. In terms of biological role, catalyzes the condensation of (S)-aspartate-beta-semialdehyde [(S)-ASA] and pyruvate to 4-hydroxy-tetrahydrodipicolinate (HTPA). The chain is 4-hydroxy-tetrahydrodipicolinate synthase from Synechococcus sp. (strain CC9605).